Consider the following 213-residue polypeptide: Thymidylate kinase (213 aa).

10 to 17 (GLEGAGKT) is a binding site for ATP.

The protein belongs to the thymidylate kinase family.

It carries out the reaction dTMP + ATP = dTDP + ADP. Functionally, phosphorylation of dTMP to form dTDP in both de novo and salvage pathways of dTTP synthesis. In Escherichia coli O7:K1 (strain IAI39 / ExPEC), this protein is Thymidylate kinase.